A 917-amino-acid chain; its full sequence is Hexokinase-2 (917 aa).

At M1 the chain carries N-acetylmethionine. The interval 1 to 16 is mitochondrial-binding peptide (MBP); it reads MIASHLLAYFFTELNH. 2 consecutive Hexokinase domains span residues 16–458 and 464–906; these read HDQV…MVTA and AYQH…LITA. Residues R30 and 84-89 contribute to the ATP site; that span reads DLGGTN. Residues 73-207 form a hexokinase small subdomain 1 region; it reads DGTEHGEFLA…DFDIDIVAMV (135 aa). 84 to 88 lines the D-glucose 6-phosphate pocket; it reads DLGGT. D-glucose-binding positions include 155 to 156, 172 to 173, 208 to 209, N235, E260, and 291 to 294; these read SF, TK, ND, and QLFE. The segment at 208–447 is hexokinase large subdomain 1; the sequence is NDTVATMMTC…CDIRFLCSED (240 aa). D209 provides a ligand contact to D-glucose 6-phosphate. 413–415 provides a ligand contact to D-glucose 6-phosphate; the sequence is DGS. An ATP-binding site is contributed by 425 to 426; the sequence is KR. D-glucose 6-phosphate contacts are provided by residues S449 and 532-536; that span reads DLGGT. The segment at 521–655 is hexokinase small subdomain 2; it reads DGTEKGDFLA…EFDLDVVAVV (135 aa). 532–537 provides a ligand contact to ATP; sequence DLGGTN. D-glucose-binding positions include 603-604, 620-621, and 656-657; these read SF, TK, and ND. Residues 656–895 form a hexokinase large subdomain 2 region; it reads NDTVGTMMTC…CDVSFLESED (240 aa). The D-glucose 6-phosphate site is built by D657 and T680. T680 is an ATP binding site. D-glucose-binding positions include 682-683, E708, and 739-742; these read SN and QRFE. Residues 747–748, 784–788, and 863–867 contribute to the ATP site; these read GM, TKFLS, and TLYKL. Residues 861–863 and S897 contribute to the D-glucose 6-phosphate site; that span reads DGT.

It belongs to the hexokinase family. Monomer. Interacts with TIGAR; the interaction increases hexokinase activity in a hypoxia- and HIF1A-dependent manner.

It is found in the mitochondrion outer membrane. The protein localises to the cytoplasm. It localises to the cytosol. The enzyme catalyses a D-hexose + ATP = a D-hexose 6-phosphate + ADP + H(+). The catalysed reaction is D-fructose + ATP = D-fructose 6-phosphate + ADP + H(+). It catalyses the reaction D-glucose + ATP = D-glucose 6-phosphate + ADP + H(+). The protein operates within carbohydrate metabolism; hexose metabolism. Its pathway is carbohydrate degradation; glycolysis; D-glyceraldehyde 3-phosphate and glycerone phosphate from D-glucose: step 1/4. With respect to regulation, hexokinase activity is specifically inhibited by 2,6-disubstituted glucosamines. Its function is as follows. Catalyzes the phosphorylation of hexose, such as D-glucose and D-fructose, to hexose 6-phosphate (D-glucose 6-phosphate and D-fructose 6-phosphate, respectively). Mediates the initial step of glycolysis by catalyzing phosphorylation of D-glucose to D-glucose 6-phosphate. Plays a key role in maintaining the integrity of the outer mitochondrial membrane by preventing the release of apoptogenic molecules from the intermembrane space and subsequent apoptosis. This Equus zebra (Mountain zebra) protein is Hexokinase-2.